The following is a 1451-amino-acid chain: Protein clueless (1451 aa).

Disordered regions lie at residues 1–101 (MALE…EYAA) and 264–286 (KKTR…VSEP). Over residues 9–53 (NSNATATGDATATKASSKAKENNNTAGGKKNLNPIPSQQNSNQNL) the composition is skewed to low complexity. Residues 66–75 (GKKKGKKNRN) are compositionally biased toward basic residues. S270 is subject to Phosphoserine. Residues 424–666 (RAEDAFSSKL…RTFPPDVNFL (243 aa)) enclose the Clu domain. 3 disordered regions span residues 722-775 (AKKQ…ESKT), 961-1012 (AVSS…SSVS), and 1413-1451 (ANNN…ATSS). Basic and acidic residues predominate over residues 748–758 (GADKTDVKEEK). Residues 969-984 (KKRGNGGKHNKHKSSK) show a composition bias toward basic residues. Over residues 989 to 1010 (QQQQQTTGNQNGSSSGTSNGSS) the composition is skewed to low complexity.

Belongs to the CLU family.

It localises to the cytoplasm. In terms of biological role, mRNA-binding protein involved in proper cytoplasmic distribution of mitochondria. The polypeptide is Protein clueless (Drosophila yakuba (Fruit fly)).